Reading from the N-terminus, the 604-residue chain is Choline transporter-like protein 3 (604 aa).

N-linked (GlcNAc...) asparagine glycosylation is found at asparagine 90 and asparagine 103. The next 5 helical transmembrane spans lie at 165-185 (DTILGLCAFVFALSLAMLFTF), 195-215 (IIISLVILGLLFVCGVFWWLY), 237-257 (LAFAVITTVVTVVLLALIFTL), 286-306 (LWTFAILVFFWVLWVAVLLSL), and 330-350 (YLWWYHLIGLIWTSEFILTCQ). Residues asparagine 454 and asparagine 472 are each glycosylated (N-linked (GlcNAc...) asparagine). A run of 2 helical transmembrane segments spans residues 485–505 (FIIFLGKVLVVCFSVFGGLMA) and 514–534 (VWAIPLLLVAFFAYLAAHSFL). A compositionally biased stretch (polar residues) spans 581–592 (NARSQGHKNSLP). Residues 581-604 (NARSQGHKNSLPNEEGTELRPIVR) are disordered.

Belongs to the CTL (choline transporter-like) family. In terms of tissue distribution, expressed in colon, kidney and ileum.

It localises to the membrane. The protein is Choline transporter-like protein 3 (Slc44a3) of Rattus norvegicus (Rat).